The primary structure comprises 111 residues: Auxin-repressed 12.5 kDa protein (111 aa).

The segment at 18-111 (ERGLGMLRKV…SGETRSKHHR (94 aa)) is disordered. Residues 43–57 (TMPTTPTTPVTPTTP) are compositionally biased toward low complexity. A compositionally biased stretch (polar residues) spans 74–95 (SNLSSKTMGNQVFDSPQPNSPT).

Belongs to the DRM1/ARP family.

The chain is Auxin-repressed 12.5 kDa protein from Fragaria ananassa (Strawberry).